A 374-amino-acid polypeptide reads, in one-letter code: Peptide chain release factor 2 (374 aa).

Gln-250 bears the N5-methylglutamine mark.

This sequence belongs to the prokaryotic/mitochondrial release factor family. In terms of processing, methylated by PrmC. Methylation increases the termination efficiency of RF2.

It localises to the cytoplasm. Functionally, peptide chain release factor 2 directs the termination of translation in response to the peptide chain termination codons UGA and UAA. The protein is Peptide chain release factor 2 of Roseobacter denitrificans (strain ATCC 33942 / OCh 114) (Erythrobacter sp. (strain OCh 114)).